Reading from the N-terminus, the 128-residue chain is Ribonuclease P protein component (128 aa).

The protein belongs to the RnpA family. Consists of a catalytic RNA component (M1 or rnpB) and a protein subunit.

The catalysed reaction is Endonucleolytic cleavage of RNA, removing 5'-extranucleotides from tRNA precursor.. Its function is as follows. RNaseP catalyzes the removal of the 5'-leader sequence from pre-tRNA to produce the mature 5'-terminus. It can also cleave other RNA substrates such as 4.5S RNA. The protein component plays an auxiliary but essential role in vivo by binding to the 5'-leader sequence and broadening the substrate specificity of the ribozyme. In Prochlorococcus marinus (strain MIT 9301), this protein is Ribonuclease P protein component.